Here is a 225-residue protein sequence, read N- to C-terminus: Transmembrane protein 40 (225 aa).

M1 carries the N-acetylmethionine modification. Over residues 1-14 the composition is skewed to low complexity; the sequence is MEASGSSSQSQDSG. The disordered stretch occupies residues 1-96; sequence MEASGSSSQS…RRDSLRGADH (96 aa). Over residues 15–29 the composition is skewed to basic and acidic residues; that stretch reads GVHRETEDHYQETEL. A compositionally biased stretch (basic residues) spans 30-39; that stretch reads HKHHGKARER. Over residues 46-68 the composition is skewed to low complexity; the sequence is SSSSSSSSSSSSSSSSSSSSSSD. Positions 78 to 87 are enriched in basic residues; sequence GPRKHRRRPR. S129 is subject to Phosphoserine. 2 helical membrane-spanning segments follow: residues 152–172 and 179–199; these read FFHFVLLCFAIGALLVCYHYY and LGVGLLTFASLETIGIYFGLV.

It is found in the membrane. The chain is Transmembrane protein 40 (Tmem40) from Mus musculus (Mouse).